A 408-amino-acid polypeptide reads, in one-letter code: S100P-binding protein (408 aa).

Disordered regions lie at residues 1 to 111 (MMCS…AETP), 162 to 234 (KDET…SENP), and 271 to 291 (VSTSSNKQDVLNKDSGKMKGH). Over residues 28 to 59 (SLDEDGLDDSLLELSEGEEDDGDVNYTEEEID) the composition is skewed to acidic residues. 2 stretches are compositionally biased toward basic and acidic residues: residues 77 to 86 (DGGHVEKGER) and 162 to 185 (KDETDSSKDTEKLSSLGEEMREDG). Position 187 is a phosphoserine (Ser187). Polar residues predominate over residues 188-234 (PNESKLCTESEGISPNNSAWNGPQLSSSNNNFQQTVSDKNMPDSENP). The span at 280-291 (VLNKDSGKMKGH) shows a compositional bias: basic and acidic residues.

Interacts with S100P. In terms of tissue distribution, expressed in brain, spleen, and lung. Not detected in pancreas or liver. In pancreas, expressed predominantly in islet cells and to a lesser extent in acinar cells, but not expressed in ductal cells. Up-regulated in various pancreatic ductal adenocarcinomas and pancreatic intraepithelial neoplasias. Detected in pancreatic ductal adenocarcinoma cells (at protein level). Not detected in non-neoplastic ductal epithelium (at protein level).

It localises to the nucleus. This Homo sapiens (Human) protein is S100P-binding protein.